A 703-amino-acid polypeptide reads, in one-letter code: Fibulin-1 (703 aa).

An N-terminal signal peptide occupies residues 1–29 (MERAAPSRRVPLPLLLLGGLALLAAGVDA). Disulfide bonds link Cys-36–Cys-61, Cys-37–Cys-68, Cys-50–Cys-69, Cys-78–Cys-109, Cys-91–Cys-110, Cys-112–Cys-136, Cys-113–Cys-143, Cys-126–Cys-144, Cys-180–Cys-190, Cys-186–Cys-199, Cys-201–Cys-214, Cys-220–Cys-233, Cys-227–Cys-242, Cys-248–Cys-260, Cys-266–Cys-279, Cys-273–Cys-288, Cys-294–Cys-306, Cys-312–Cys-325, Cys-319–Cys-334, Cys-341–Cys-354, Cys-360–Cys-373, Cys-367–Cys-382, Cys-384–Cys-397, Cys-403–Cys-415, Cys-411–Cys-424, Cys-426–Cys-439, Cys-445–Cys-454, Cys-450–Cys-463, Cys-465–Cys-479, Cys-485–Cys-498, Cys-494–Cys-507, Cys-509–Cys-523, Cys-529–Cys-542, Cys-536–Cys-551, and Cys-556–Cys-577. Anaphylatoxin-like domains follow at residues 36–76 (CCAD…LEEL), 77–111 (HCAT…RCCH), and 112–144 (CCLL…QACC). N-linked (GlcNAc...) (complex) asparagine glycosylation is present at Asn-98. The 40-residue stretch at 176–215 (LNDRCRGGGPCKQQCRDTGDEVVCSCFVGYQLLSDGVSCE) folds into the EGF-like 1 domain. The region spanning 216-261 (DVNECITGSHSCRLGESCINTVGSFRCQRDSSCGTGYELTEDNSCK) is the EGF-like 2; calcium-binding domain. The 46-residue stretch at 262 to 307 (DIDECESGIHNCLPDFICQNTLGSFRCRPKLQCKSGFIQDALGNCI) folds into the EGF-like 3; calcium-binding domain. An EGF-like 4; calcium-binding domain is found at 308–355 (DINECLSISAPCPIGHTCINTEGSYTCQKNVPNCGRGYHLNEEGTRCV). The EGF-like 5; calcium-binding domain occupies 356–398 (DVDECAPPAEPCGKGHRCVNSPGSFRCECKTGYYFDGISRMCV). A self-association and FN1-binding; calcium is necessary for homotypic binding, but not for heterotypic binding region spans residues 356–440 (DVDECAPPAE…RLSVDGRSCE (85 aa)). In terms of domain architecture, EGF-like 6; calcium-binding spans 399–440 (DVNECQRYPGRLCGHKCENTLGSYLCSCSVGFRLSVDGRSCE). The 40-residue stretch at 441 to 480 (DINECSSSPCSQECANVYGSYQCYCRRGYQLSDVDGVTCE) folds into the EGF-like 7; calcium-binding domain. The region spanning 481-524 (DIDECALPTGGHICSYRCINIPGSFQCSCPSSGYRLAPNGRNCQ) is the EGF-like 8; calcium-binding domain. The 54-residue stretch at 525-578 (DIDECVTGIHNCSINETCFNIQGGFRCLAFECPENYRRSAATLQQEKTDTVRCI) folds into the EGF-like 9; calcium-binding domain. Residues Asn-535 and Asn-539 are each glycosylated (N-linked (GlcNAc...) asparagine).

Belongs to the fibulin family. In terms of assembly, homomultimerizes and interacts with various extracellular matrix components such as FN1, LAMA1, LAMA2, NID, ACAN, CSPG2 and type IV collagen. Also interacts with APP and FGB. Interacts with FBLN7. Interacts with CCN3. As to quaternary structure, (Microbial infection) Interacts with human papillomavirus/HPV type 16, 18 and 31 proteins E6. As to expression, isoform A and isoform B are only expressed in placenta. Isoform C and isoform D are expressed in a variety of tissues and cultured cells.

It is found in the secreted. The protein localises to the extracellular space. It localises to the extracellular matrix. Its function is as follows. Incorporated into fibronectin-containing matrix fibers. May play a role in cell adhesion and migration along protein fibers within the extracellular matrix (ECM). Could be important for certain developmental processes and contribute to the supramolecular organization of ECM architecture, in particular to those of basement membranes. Has been implicated in a role in cellular transformation and tumor invasion, it appears to be a tumor suppressor. May play a role in haemostasis and thrombosis owing to its ability to bind fibrinogen and incorporate into clots. Could play a significant role in modulating the neurotrophic activities of APP, particularly soluble APP. This is Fibulin-1 (FBLN1) from Homo sapiens (Human).